Here is a 322-residue protein sequence, read N- to C-terminus: Methionyl-tRNA formyltransferase (322 aa).

Residue 115–118 participates in (6S)-5,6,7,8-tetrahydrofolate binding; it reads SLLP.

The protein belongs to the Fmt family.

The enzyme catalyses L-methionyl-tRNA(fMet) + (6R)-10-formyltetrahydrofolate = N-formyl-L-methionyl-tRNA(fMet) + (6S)-5,6,7,8-tetrahydrofolate + H(+). Functionally, attaches a formyl group to the free amino group of methionyl-tRNA(fMet). The formyl group appears to play a dual role in the initiator identity of N-formylmethionyl-tRNA by promoting its recognition by IF2 and preventing the misappropriation of this tRNA by the elongation apparatus. In Treponema denticola (strain ATCC 35405 / DSM 14222 / CIP 103919 / JCM 8153 / KCTC 15104), this protein is Methionyl-tRNA formyltransferase.